The chain runs to 206 residues: Small ribosomal subunit protein uS4 (206 aa).

An S4 RNA-binding domain is found at 96 to 159; it reads SRLDNVVYRM…KKQARIVEGL (64 aa).

Belongs to the universal ribosomal protein uS4 family. In terms of assembly, part of the 30S ribosomal subunit. Contacts protein S5. The interaction surface between S4 and S5 is involved in control of translational fidelity.

In terms of biological role, one of the primary rRNA binding proteins, it binds directly to 16S rRNA where it nucleates assembly of the body of the 30S subunit. Functionally, with S5 and S12 plays an important role in translational accuracy. This chain is Small ribosomal subunit protein uS4, found in Chromobacterium violaceum (strain ATCC 12472 / DSM 30191 / JCM 1249 / CCUG 213 / NBRC 12614 / NCIMB 9131 / NCTC 9757 / MK).